The following is a 193-amino-acid chain: Peptidyl-tRNA hydrolase (193 aa).

Y15 serves as a coordination point for tRNA. The active-site Proton acceptor is H20. Positions 65, 67, and 113 each coordinate tRNA.

This sequence belongs to the PTH family. Monomer.

The protein resides in the cytoplasm. It catalyses the reaction an N-acyl-L-alpha-aminoacyl-tRNA + H2O = an N-acyl-L-amino acid + a tRNA + H(+). Hydrolyzes ribosome-free peptidyl-tRNAs (with 1 or more amino acids incorporated), which drop off the ribosome during protein synthesis, or as a result of ribosome stalling. Its function is as follows. Catalyzes the release of premature peptidyl moieties from peptidyl-tRNA molecules trapped in stalled 50S ribosomal subunits, and thus maintains levels of free tRNAs and 50S ribosomes. The polypeptide is Peptidyl-tRNA hydrolase (Ehrlichia canis (strain Jake)).